We begin with the raw amino-acid sequence, 181 residues long: Large ribosomal subunit protein uL5 (181 aa).

Belongs to the universal ribosomal protein uL5 family. In terms of assembly, part of the 50S ribosomal subunit; part of the 5S rRNA/L5/L18/L25 subcomplex. Contacts the 5S rRNA and the P site tRNA. Forms a bridge to the 30S subunit in the 70S ribosome.

Functionally, this is one of the proteins that bind and probably mediate the attachment of the 5S RNA into the large ribosomal subunit, where it forms part of the central protuberance. In the 70S ribosome it contacts protein S13 of the 30S subunit (bridge B1b), connecting the 2 subunits; this bridge is implicated in subunit movement. Contacts the P site tRNA; the 5S rRNA and some of its associated proteins might help stabilize positioning of ribosome-bound tRNAs. The chain is Large ribosomal subunit protein uL5 from Mesomycoplasma hyopneumoniae (strain 232) (Mycoplasma hyopneumoniae).